The sequence spans 288 residues: 4-hydroxybenzoate octaprenyltransferase (288 aa).

A run of 8 helical transmembrane segments spans residues 23–43 (IGSLLLLWPTLWALWLAGKGI), 46–66 (TKILIVFVLGVFFMRAAGCVV), 98–118 (ILFVVLVLLSFGLVLTLNSMT), 141–161 (LPQVVLGAAFGWSIPMGFAAV), 165–185 (LPLVCWLLLLANICWTVAYDT), 213–233 (LIIGLLQLATLVLMVTIGWLM), 234–254 (NLGGAFYWSILLAGALFVHQQ), and 268–288 (AFLNNNYVGLVLFLGIFISYL).

Belongs to the UbiA prenyltransferase family. Mg(2+) serves as cofactor.

It localises to the cell inner membrane. It catalyses the reaction all-trans-octaprenyl diphosphate + 4-hydroxybenzoate = 4-hydroxy-3-(all-trans-octaprenyl)benzoate + diphosphate. It functions in the pathway cofactor biosynthesis; ubiquinone biosynthesis. In terms of biological role, catalyzes the prenylation of para-hydroxybenzoate (PHB) with an all-trans polyprenyl group. Mediates the second step in the final reaction sequence of ubiquinone-8 (UQ-8) biosynthesis, which is the condensation of the polyisoprenoid side chain with PHB, generating the first membrane-bound Q intermediate 3-octaprenyl-4-hydroxybenzoate. The chain is 4-hydroxybenzoate octaprenyltransferase from Yersinia enterocolitica serotype O:8 / biotype 1B (strain NCTC 13174 / 8081).